A 907-amino-acid polypeptide reads, in one-letter code: Protein translocase subunit SecA (907 aa).

Residues glutamine 87, 105–109 (GEGKT), and aspartate 512 contribute to the ATP site. The tract at residues 870 to 897 (AALAATQPQVREGEKVGRNDPCPCGSGK) is disordered. Zn(2+) is bound by residues cysteine 891, cysteine 893, cysteine 902, and histidine 903.

This sequence belongs to the SecA family. In terms of assembly, monomer and homodimer. Part of the essential Sec protein translocation apparatus which comprises SecA, SecYEG and auxiliary proteins SecDF-YajC and YidC. Requires Zn(2+) as cofactor.

The protein resides in the cell inner membrane. It is found in the cytoplasm. The enzyme catalyses ATP + H2O + cellular proteinSide 1 = ADP + phosphate + cellular proteinSide 2.. Its function is as follows. Part of the Sec protein translocase complex. Interacts with the SecYEG preprotein conducting channel. Has a central role in coupling the hydrolysis of ATP to the transfer of proteins into and across the cell membrane, serving both as a receptor for the preprotein-SecB complex and as an ATP-driven molecular motor driving the stepwise translocation of polypeptide chains across the membrane. The chain is Protein translocase subunit SecA from Shewanella piezotolerans (strain WP3 / JCM 13877).